A 227-amino-acid chain; its full sequence is tRNA (guanine-N(7)-)-methyltransferase (227 aa).

S-adenosyl-L-methionine-binding residues include E57, E82, D109, and D132. Residue D132 is part of the active site. Substrate contacts are provided by residues K136, D168, and 205–208 (TKFE).

This sequence belongs to the class I-like SAM-binding methyltransferase superfamily. TrmB family.

It catalyses the reaction guanosine(46) in tRNA + S-adenosyl-L-methionine = N(7)-methylguanosine(46) in tRNA + S-adenosyl-L-homocysteine. It participates in tRNA modification; N(7)-methylguanine-tRNA biosynthesis. Its function is as follows. Catalyzes the formation of N(7)-methylguanine at position 46 (m7G46) in tRNA. This Leifsonia xyli subsp. xyli (strain CTCB07) protein is tRNA (guanine-N(7)-)-methyltransferase.